A 414-amino-acid chain; its full sequence is 3-phosphoshikimate 1-carboxyvinyltransferase (414 aa).

3-phosphoshikimate is bound by residues Lys-20, Ser-21, and Arg-25. Lys-20 lines the phosphoenolpyruvate pocket. 2 residues coordinate phosphoenolpyruvate: Gly-85 and Arg-113. Positions 154, 155, 156, 181, 296, and 323 each coordinate 3-phosphoshikimate. Gln-156 serves as a coordination point for phosphoenolpyruvate. Catalysis depends on Asp-296, which acts as the Proton acceptor. 3 residues coordinate phosphoenolpyruvate: Arg-327, Arg-371, and Lys-395.

Belongs to the EPSP synthase family. As to quaternary structure, monomer.

It localises to the cytoplasm. The enzyme catalyses 3-phosphoshikimate + phosphoenolpyruvate = 5-O-(1-carboxyvinyl)-3-phosphoshikimate + phosphate. It functions in the pathway metabolic intermediate biosynthesis; chorismate biosynthesis. Functionally, catalyzes the transfer of the enolpyruvyl moiety of phosphoenolpyruvate (PEP) to the 5-hydroxyl of shikimate-3-phosphate (S3P) to produce enolpyruvyl shikimate-3-phosphate and inorganic phosphate. In Saccharolobus islandicus (strain Y.G.57.14 / Yellowstone #1) (Sulfolobus islandicus), this protein is 3-phosphoshikimate 1-carboxyvinyltransferase.